We begin with the raw amino-acid sequence, 320 residues long: Zona pellucida-binding protein 1 (320 aa).

Residues asparagine 85 and asparagine 158 are each glycosylated (N-linked (GlcNAc...) asparagine).

The protein belongs to the zona pellucida-binding protein Sp38 family.

The protein localises to the cytoplasmic vesicle. Its subcellular location is the secretory vesicle. It is found in the acrosome. It localises to the secreted. The protein resides in the acrosome membrane. Functionally, plays a role in sperm morphogenesis and in sperm-oocyte interaction during fertilization. The chain is Zona pellucida-binding protein 1 (ZPBP1) from Gallus gallus (Chicken).